Reading from the N-terminus, the 224-residue chain is Protein GrpE (224 aa).

Positions 27 to 77 (NQASEDIDQENQSEVVDDTTENEDASEEVYEEDTASEDGSKEKKSFFKKKE) are disordered. Positions 31 to 62 (EDIDQENQSEVVDDTTENEDASEEVYEEDTAS) are enriched in acidic residues.

It belongs to the GrpE family. As to quaternary structure, homodimer.

It localises to the cytoplasm. Functionally, participates actively in the response to hyperosmotic and heat shock by preventing the aggregation of stress-denatured proteins, in association with DnaK and GrpE. It is the nucleotide exchange factor for DnaK and may function as a thermosensor. Unfolded proteins bind initially to DnaJ; upon interaction with the DnaJ-bound protein, DnaK hydrolyzes its bound ATP, resulting in the formation of a stable complex. GrpE releases ADP from DnaK; ATP binding to DnaK triggers the release of the substrate protein, thus completing the reaction cycle. Several rounds of ATP-dependent interactions between DnaJ, DnaK and GrpE are required for fully efficient folding. The chain is Protein GrpE from Lachnoclostridium phytofermentans (strain ATCC 700394 / DSM 18823 / ISDg) (Clostridium phytofermentans).